The chain runs to 476 residues: Aspartyl/glutamyl-tRNA(Asn/Gln) amidotransferase subunit B (476 aa).

Belongs to the GatB/GatE family. GatB subfamily. Heterotrimer of A, B and C subunits.

It catalyses the reaction L-glutamyl-tRNA(Gln) + L-glutamine + ATP + H2O = L-glutaminyl-tRNA(Gln) + L-glutamate + ADP + phosphate + H(+). It carries out the reaction L-aspartyl-tRNA(Asn) + L-glutamine + ATP + H2O = L-asparaginyl-tRNA(Asn) + L-glutamate + ADP + phosphate + 2 H(+). Functionally, allows the formation of correctly charged Asn-tRNA(Asn) or Gln-tRNA(Gln) through the transamidation of misacylated Asp-tRNA(Asn) or Glu-tRNA(Gln) in organisms which lack either or both of asparaginyl-tRNA or glutaminyl-tRNA synthetases. The reaction takes place in the presence of glutamine and ATP through an activated phospho-Asp-tRNA(Asn) or phospho-Glu-tRNA(Gln). The sequence is that of Aspartyl/glutamyl-tRNA(Asn/Gln) amidotransferase subunit B from Enterococcus faecalis (strain ATCC 700802 / V583).